Consider the following 302-residue polypeptide: HTH-type transcriptional regulator AbgR (302 aa).

An HTH lysR-type domain is found at 5 to 62 (VKIHQIRAFVEVARQGSIRGASRMLNMSQPALSKSIQELEEGLAAQLFFRRSKGVTLT). The segment at residues 22–41 (IRGASRMLNMSQPALSKSIQ) is a DNA-binding region (H-T-H motif).

Belongs to the LysR transcriptional regulatory family.

Functionally, could be the regulator of the abg operon. This chain is HTH-type transcriptional regulator AbgR (abgR), found in Escherichia coli (strain K12).